Reading from the N-terminus, the 299-residue chain is Bifunctional protein FolD (299 aa).

NADP(+) contacts are provided by residues 164-166 (GRS) and Ile-234.

Belongs to the tetrahydrofolate dehydrogenase/cyclohydrolase family. Homodimer.

It catalyses the reaction (6R)-5,10-methylene-5,6,7,8-tetrahydrofolate + NADP(+) = (6R)-5,10-methenyltetrahydrofolate + NADPH. The enzyme catalyses (6R)-5,10-methenyltetrahydrofolate + H2O = (6R)-10-formyltetrahydrofolate + H(+). It functions in the pathway one-carbon metabolism; tetrahydrofolate interconversion. In terms of biological role, catalyzes the oxidation of 5,10-methylenetetrahydrofolate to 5,10-methenyltetrahydrofolate and then the hydrolysis of 5,10-methenyltetrahydrofolate to 10-formyltetrahydrofolate. The protein is Bifunctional protein FolD of Christiangramia forsetii (strain DSM 17595 / CGMCC 1.15422 / KT0803) (Gramella forsetii).